The primary structure comprises 176 residues: ATP synthase subunit delta (176 aa).

It belongs to the ATPase delta chain family. F-type ATPases have 2 components, F(1) - the catalytic core - and F(0) - the membrane proton channel. F(1) has five subunits: alpha(3), beta(3), gamma(1), delta(1), epsilon(1). F(0) has three main subunits: a(1), b(2) and c(10-14). The alpha and beta chains form an alternating ring which encloses part of the gamma chain. F(1) is attached to F(0) by a central stalk formed by the gamma and epsilon chains, while a peripheral stalk is formed by the delta and b chains.

The protein localises to the cell inner membrane. In terms of biological role, f(1)F(0) ATP synthase produces ATP from ADP in the presence of a proton or sodium gradient. F-type ATPases consist of two structural domains, F(1) containing the extramembraneous catalytic core and F(0) containing the membrane proton channel, linked together by a central stalk and a peripheral stalk. During catalysis, ATP synthesis in the catalytic domain of F(1) is coupled via a rotary mechanism of the central stalk subunits to proton translocation. Functionally, this protein is part of the stalk that links CF(0) to CF(1). It either transmits conformational changes from CF(0) to CF(1) or is implicated in proton conduction. The polypeptide is ATP synthase subunit delta (Actinobacillus succinogenes (strain ATCC 55618 / DSM 22257 / CCUG 43843 / 130Z)).